The following is a 317-amino-acid chain: Ribosomal RNA small subunit methyltransferase H (317 aa).

Residues 32–34 (GGH), Asp51, Phe78, Asp99, and Gln106 contribute to the S-adenosyl-L-methionine site.

This sequence belongs to the methyltransferase superfamily. RsmH family.

The protein localises to the cytoplasm. It carries out the reaction cytidine(1402) in 16S rRNA + S-adenosyl-L-methionine = N(4)-methylcytidine(1402) in 16S rRNA + S-adenosyl-L-homocysteine + H(+). Specifically methylates the N4 position of cytidine in position 1402 (C1402) of 16S rRNA. The sequence is that of Ribosomal RNA small subunit methyltransferase H from Helicobacter hepaticus (strain ATCC 51449 / 3B1).